The following is a 391-amino-acid chain: Nucleosome assembly protein 1-like 1 (391 aa).

Met1 is modified (N-acetylmethionine). Residues 1–10 (MADIDNKEQS) are compositionally biased toward basic and acidic residues. A disordered region spans residues 1–32 (MADIDNKEQSELDQDLDDVEEVEEEETGEETK). Ala2 bears the N-acetylalanine mark. At Ser10 the chain carries Phosphoserine. Positions 11 to 28 (ELDQDLDDVEEVEEEETG) are enriched in acidic residues. Phosphothreonine occurs at positions 62 and 64. Residue Ser69 is modified to Phosphoserine. Lys116 carries the post-translational modification N6-acetyllysine. An NAP1L motif motif is present at residues 125–150 (YEPTEEECEWKPDEEDEISEELKEKA). The span at 132 to 143 (CEWKPDEEDEIS) shows a compositional bias: acidic residues. Positions 132-163 (CEWKPDEEDEISEELKEKAKIEDEKKDEEKED) are disordered. A Phosphoserine modification is found at Ser143. Residues 144-163 (EELKEKAKIEDEKKDEEKED) show a composition bias toward basic and acidic residues. The short motif at 273-279 (IKKKQKH) is the Nuclear localization signal element. Over residues 346–376 (AIEDDDDDYDEEGEEADEEGEEEGDEENDPD) the composition is skewed to acidic residues. The tract at residues 346–391 (AIEDDDDDYDEEGEEADEEGEEEGDEENDPDYDPKKDQNPAECKQQ) is disordered. The span at 377 to 391 (YDPKKDQNPAECKQQ) shows a compositional bias: basic and acidic residues. Cys388 is subject to Cysteine methyl ester. Cys388 carries the S-farnesyl cysteine lipid modification. A propeptide spans 389 to 391 (KQQ) (removed in mature form).

It belongs to the nucleosome assembly protein (NAP) family. In terms of assembly, homodimer. The dimer binds strongly and sequentially to single and double H2A-H2B heterodimers. Interacts with ERCC6; this interaction increases ERCC6 processivity. Interacts with RAD54. Interacts with SETD1A. As to quaternary structure, (Microbial infection) Interacts with human herpesvirus 8 protein LANA1 (via N-terminus); this interaction is required for LANA1-dependent DNA replication. (Microbial infection) Interacts with hepatitis virus protein NS5A (via C-terminus); this interaction sequesters NAP1L1 in the cytoplasm, blocking its nuclear translocation. In terms of assembly, (Microbial infection) Interacts with Chikungunya virus non-structural protein 3 (via C-terminus). Post-translationally, monoglycylated on glutamate residues. Cannot be polyglycylated due to the absence of functional TTLL10 in human. In terms of processing, polyglutamylated by TTLL4 on glutamate residues, resulting in polyglutamate chains on the gamma-carboxyl group. Both polyglutamylation and monoglycylation modifications can coexist on the same protein on adjacent residues, and lowering polyglycylation levels increases polyglutamylation, and reciprocally. In terms of tissue distribution, ubiquitously expressed.

Its subcellular location is the nucleus. It is found in the melanosome. The protein localises to the cytoplasm. Histone chaperone that plays a role in the nuclear import of H2A-H2B and nucleosome assembly. Also participates in several important DNA repair mechanisms: greatly enhances ERCC6-mediated chromatin remodeling which is essential for transcription-coupled nucleotide excision DNA repair. Also stimulates homologous recombination (HR) by RAD51 and RAD54 which is essential in mitotic DNA double strand break (DSB) repair. Plays a key role in the regulation of embryonic neurogenesis. Promotes the proliferation of neural progenitors and inhibits neuronal differentiation during cortical development. Regulates neurogenesis via the modulation of RASSF10; regulates RASSF10 expression by promoting SETD1A-mediated H3K4 methylation at the RASSF10 promoter. Its function is as follows. (Microbial infection) Positively regulates Epstein-Barr virus reactivation in epithelial cells through the induction of viral BZLF1 expression. In terms of biological role, (Microbial infection) Together with human herpesvirus 8 protein LANA1, assists the proper assembly of the nucleosome on the replicated viral DNA. The polypeptide is Nucleosome assembly protein 1-like 1 (NAP1L1) (Homo sapiens (Human)).